We begin with the raw amino-acid sequence, 190 residues long: Jupiter microtubule associated homolog 2 (190 aa).

The residue at position 1 (Met1) is an N-acetylmethionine. Positions 1 to 15 (MFQGADSQAGKSGSR) are enriched in polar residues. Positions 1–190 (MFQGADSQAG…PGGKSSLSFY (190 aa)) are disordered. At Lys11 the chain carries N6-acetyllysine. Ser30 is subject to Phosphoserine. Residues 35–44 (ISSSKPNRMA) are compositionally biased toward polar residues. Phosphoserine is present on residues Ser45, Ser69, and Ser97. 2 stretches are compositionally biased toward basic and acidic residues: residues 110 to 129 (KPKD…DLKA) and 138 to 153 (EQSD…HAKI). Ser144 carries the phosphoserine modification.

This sequence belongs to the JUPITER family. As to quaternary structure, monomer. Dimer. Interacts with TPCN1.

It localises to the cytoplasm. Its subcellular location is the nucleus. In terms of biological role, nicotinic acid adenine dinucleotide phosphate (NAADP) binding protein required for NAADP-evoked intracellular calcium release. Confers NAADP-sensitivity to the two pore channels (TPCs) complex. Enables NAADP to activate Ca(2+) release from the endoplasmic reticulum through ryanodine receptors. The sequence is that of Jupiter microtubule associated homolog 2 from Mus musculus (Mouse).